The following is a 148-amino-acid chain: Large ribosomal subunit protein bL9 (148 aa).

It belongs to the bacterial ribosomal protein bL9 family.

Binds to the 23S rRNA. This is Large ribosomal subunit protein bL9 from Solibacter usitatus (strain Ellin6076).